The primary structure comprises 151 residues: ATP synthase subunit b' (151 aa).

Residues 18–38 (TLPLMALQVVLLTFILNALFF) traverse the membrane as a helical segment.

Belongs to the ATPase B chain family. In terms of assembly, F-type ATPases have 2 components, F(1) - the catalytic core - and F(0) - the membrane proton channel. F(1) has five subunits: alpha(3), beta(3), gamma(1), delta(1), epsilon(1). F(0) has four main subunits: a(1), b(1), b'(1) and c(10-14). The alpha and beta chains form an alternating ring which encloses part of the gamma chain. F(1) is attached to F(0) by a central stalk formed by the gamma and epsilon chains, while a peripheral stalk is formed by the delta, b and b' chains.

It is found in the cellular thylakoid membrane. Functionally, f(1)F(0) ATP synthase produces ATP from ADP in the presence of a proton or sodium gradient. F-type ATPases consist of two structural domains, F(1) containing the extramembraneous catalytic core and F(0) containing the membrane proton channel, linked together by a central stalk and a peripheral stalk. During catalysis, ATP synthesis in the catalytic domain of F(1) is coupled via a rotary mechanism of the central stalk subunits to proton translocation. Component of the F(0) channel, it forms part of the peripheral stalk, linking F(1) to F(0). The b'-subunit is a diverged and duplicated form of b found in plants and photosynthetic bacteria. This Prochlorococcus marinus (strain MIT 9313) protein is ATP synthase subunit b'.